The sequence spans 106 residues: Small ribosomal subunit protein bS16 (106 aa).

It belongs to the bacterial ribosomal protein bS16 family.

The chain is Small ribosomal subunit protein bS16 from Protochlamydia amoebophila (strain UWE25).